The sequence spans 1064 residues: Carbamoyl phosphate synthase large chain (1064 aa).

The carboxyphosphate synthetic domain stretch occupies residues 1-401 (MPKRADIKKI…ALMKAIRSLE (401 aa)). R129, R169, G175, G176, K208, I210, E215, G241, I242, H243, Q284, and E298 together coordinate ATP. In terms of domain architecture, ATP-grasp 1 spans 133–327 (KQLMEALKEP…IAKMAAKIAI (195 aa)). Q284, E298, and N300 together coordinate Mg(2+). Residues Q284, E298, and N300 each contribute to the Mn(2+) site. The tract at residues 402 to 546 (IGTFALDDLT…YSTYELENES (145 aa)) is oligomerization domain. Residues 547–929 (LKEKRPSVLV…ALYKAFVAAG (383 aa)) are carbamoyl phosphate synthetic domain. The ATP-grasp 2 domain occupies 671 to 861 (NQVIKKLDLS…LAQLATRVML (191 aa)). Residues R707, S746, L748, E752, G777, V778, H779, S780, Q820, and E832 each coordinate ATP. The Mg(2+) site is built by Q820, E832, and N834. Mn(2+) is bound by residues Q820, E832, and N834. The MGS-like domain occupies 930-1064 (FKVHEHGNVL…VSAINKGDKS (135 aa)). Residues 930–1064 (FKVHEHGNVL…VSAINKGDKS (135 aa)) are allosteric domain.

Belongs to the CarB family. Composed of two chains; the small (or glutamine) chain promotes the hydrolysis of glutamine to ammonia, which is used by the large (or ammonia) chain to synthesize carbamoyl phosphate. Tetramer of heterodimers (alpha,beta)4. It depends on Mg(2+) as a cofactor. Mn(2+) serves as cofactor.

It catalyses the reaction hydrogencarbonate + L-glutamine + 2 ATP + H2O = carbamoyl phosphate + L-glutamate + 2 ADP + phosphate + 2 H(+). The catalysed reaction is hydrogencarbonate + NH4(+) + 2 ATP = carbamoyl phosphate + 2 ADP + phosphate + 2 H(+). It participates in amino-acid biosynthesis; L-arginine biosynthesis; carbamoyl phosphate from bicarbonate: step 1/1. Its pathway is pyrimidine metabolism; UMP biosynthesis via de novo pathway; (S)-dihydroorotate from bicarbonate: step 1/3. Functionally, large subunit of the glutamine-dependent carbamoyl phosphate synthetase (CPSase). CPSase catalyzes the formation of carbamoyl phosphate from the ammonia moiety of glutamine, carbonate, and phosphate donated by ATP, constituting the first step of 2 biosynthetic pathways, one leading to arginine and/or urea and the other to pyrimidine nucleotides. The large subunit (synthetase) binds the substrates ammonia (free or transferred from glutamine from the small subunit), hydrogencarbonate and ATP and carries out an ATP-coupled ligase reaction, activating hydrogencarbonate by forming carboxy phosphate which reacts with ammonia to form carbamoyl phosphate. In Oenococcus oeni (strain ATCC BAA-331 / PSU-1), this protein is Carbamoyl phosphate synthase large chain.